Consider the following 351-residue polypeptide: Protein disulfide isomerase CRELD2 (351 aa).

Residues 1 to 21 (MRPPAPAVLGLLLLLLPTGEA) form the signal peptide. The CXXC signature appears at 28 to 31 (CKRC). 4 cysteine pairs are disulfide-bonded: Cys-28-Cys-31, Cys-137-Cys-151, Cys-145-Cys-163, and Cys-165-Cys-174. In terms of domain architecture, EGF-like 1 spans 133 to 175 (DCLACQGGSERPCSGNGHCVGDGTREGDGSCQCHLGYQGPLCS). Residues 190–237 (HSICSACDEACKTCVGPTNRDCGQCEVGWVRQDDACVDVDECAAEPPP) form an FU 1 repeat. N-linked (GlcNAc...) asparagine glycosylation is present at Asn-248. The FU 2 repeat unit spans residues 250 to 297 (SFVCEECDPTCMGCTGKGPTQCRECIAGYSKESGQCEDIDECSLAEKP). Positions 260-263 (CMGC) match the CXXC motif. Cystine bridges form between Cys-260–Cys-263, Cys-291–Cys-305, Cys-298–Cys-314, and Cys-316–Cys-327. Residues 287–328 (DIDECSLAEKPCLRDNENCYNTPGSFVCVCPDGFEEAEDTCV) form the EGF-like 2; calcium-binding domain. Residues 329–351 (QTRPAGAEATEASPTQPPSREDL) are disordered.

The protein belongs to the CRELD family. Interacts with CHRNA4. Component of a complex containing at least CRELD2, MANF, MATN3 and PDIA4.

The protein resides in the endoplasmic reticulum. It catalyses the reaction Catalyzes the rearrangement of -S-S- bonds in proteins.. In terms of biological role, protein disulfide isomerase. Might play a role in the unfolded protein response. May regulate transport of alpha4-beta2 neuronal acetylcholine receptor. The protein is Protein disulfide isomerase CRELD2 (CRELD2) of Bos taurus (Bovine).